Reading from the N-terminus, the 356-residue chain is Golgi-resident adenosine 3',5'-bisphosphate 3'-phosphatase (356 aa).

An N-acetylmethionine modification is found at Met-1. Residues 1–12 (MAPMGIRLSPLG) lie on the Cytoplasmic side of the membrane. The helical transmembrane segment at 13 to 33 (VAVFFLLGLGVLYHLYSGFLA) threads the bilayer. Residues 34-356 (GRFSLFGLGS…KLPDLEKSGH (323 aa)) lie on the Lumenal side of the membrane. The disordered stretch occupies residues 84 to 104 (ESNVLHEKSKGKTREGADDKM). Residue Asp-108 is the Proton acceptor of the active site. Mg(2+) is bound by residues Glu-131, Asp-172, Leu-174, and Asp-175. Thr-177 acts as the Proton acceptor in catalysis. Residues Ser-240 and His-243 each contribute to the AMP site. Asn-257 is a glycosylation site (N-linked (GlcNAc...) asparagine). The AMP site is built by Gly-266 and Lys-270. Position 298 (Asp-298) interacts with Mg(2+).

It belongs to the inositol monophosphatase superfamily. It depends on Mg(2+) as a cofactor. Post-translationally, N-glycosylated. Contains N-linked glycan resistant to endoglycosydase H.

Its subcellular location is the golgi apparatus. It localises to the trans-Golgi network membrane. The enzyme catalyses adenosine 3',5'-bisphosphate + H2O = AMP + phosphate. Its pathway is sulfur metabolism. Strongly inhibited by lithium. Functionally, exhibits 3'-nucleotidase activity toward adenosine 3',5'-bisphosphate (PAP), namely hydrolyzes adenosine 3',5'-bisphosphate into adenosine 5'-monophosphate (AMP) and a phosphate. May play a role in the formation of skeletal elements derived through endochondral ossification, possibly by clearing adenosine 3',5'-bisphosphate produced by Golgi sulfotransferases during glycosaminoglycan sulfation. Has no activity toward 3'-phosphoadenosine 5'-phosphosulfate (PAPS) or inositol phosphate (IP) substrates including I(1)P, I(1,4)P2, I(1,3,4)P3, I(1,4,5)P3 and I(1,3,4,5)P4. In Mus musculus (Mouse), this protein is Golgi-resident adenosine 3',5'-bisphosphate 3'-phosphatase.